A 150-amino-acid chain; its full sequence is Lipoprotein signal peptidase (150 aa).

The next 3 helical transmembrane spans lie at 5–25 (LSLV…NWIV), 59–79 (QQWF…WFLW), and 83–103 (AQNW…GNFI). Residues Asp-113 and Asp-129 contribute to the active site. A helical transmembrane segment spans residues 124-144 (IFNIADILLSVGFVLLFIAIL).

It belongs to the peptidase A8 family.

The protein resides in the cell membrane. The enzyme catalyses Release of signal peptides from bacterial membrane prolipoproteins. Hydrolyzes -Xaa-Yaa-Zaa-|-(S,diacylglyceryl)Cys-, in which Xaa is hydrophobic (preferably Leu), and Yaa (Ala or Ser) and Zaa (Gly or Ala) have small, neutral side chains.. Its pathway is protein modification; lipoprotein biosynthesis (signal peptide cleavage). Functionally, this protein specifically catalyzes the removal of signal peptides from prolipoproteins. This Lactococcus lactis subsp. lactis (strain IL1403) (Streptococcus lactis) protein is Lipoprotein signal peptidase.